The following is a 931-amino-acid chain: GPI ethanolamine phosphate transferase 1 (931 aa).

A topological domain (cytoplasmic) is located at residue Met-1. A helical transmembrane segment spans residues 2 to 24; sequence LLFFTLGLLIHFVFFASIFDIYF. Residues 25–442 are Lumenal-facing; sequence TSPLVHGMTP…SYYHTYDRFF (418 aa). Asn-128, Asn-192, and Asn-350 each carry an N-linked (GlcNAc...) asparagine glycan. The chain crosses the membrane as a helical span at residues 443–463; sequence LGVNVVIGFVGWISYASLLII. Residues 464-482 are Cytoplasmic-facing; sequence KSHSNLIKGVSKEVKKPSH. A helical transmembrane segment spans residues 483-503; the sequence is LLPCSFVAIGILVAFFLLIQA. Topologically, residues 504–508 are lumenal; sequence CPWTY. The helical transmembrane segment at 509–529 threads the bilayer; that stretch reads YVYGLLPLPIWYAVLREFQVI. Over 530-543 the chain is Cytoplasmic; sequence QDLVVSVLTYPLSH. The helical transmembrane segment at 544-564 threads the bilayer; sequence FVGYLLAFTLGIEVLVLSFFY. Residue Arg-565 is a topological domain, lumenal. The helical transmembrane segment at 566–586 threads the bilayer; sequence YMLTAGLTAFAAWPFLTRLWT. Topologically, residues 587–591 are cytoplasmic; it reads RAKMT. Residues 592-612 form a helical membrane-spanning segment; that stretch reads SLSWTFFSLLLAVFPLMPVVG. Residues 613–618 lie on the Lumenal side of the membrane; that stretch reads RKPDIS. A helical membrane pass occupies residues 619-639; it reads LVMGAGLLVLLLSLCVVTSLM. The Cytoplasmic segment spans residues 640–649; sequence KRKDSFIKEE. A helical transmembrane segment spans residues 650 to 670; that stretch reads LLVHLLQVLSTVLSMYVVYST. Residues 671 to 685 are Lumenal-facing; sequence QSSLLRKQGLPLMNQ. The helical transmembrane segment at 686–706 threads the bilayer; sequence IISWATLASSLVVPLLSSPVL. The Cytoplasmic portion of the chain corresponds to 707–723; it reads FQRLFSILLSLMSTYLL. The chain crosses the membrane as a helical span at residues 724 to 744; that stretch reads LSTGYEALFPLVLSCLMFVWI. Residues 745 to 786 are Lumenal-facing; that stretch reads NIEQETLQQSGVCCKQKLTSIQFSYNTDITQFRQLYLDDIRR. The chain crosses the membrane as a helical span at residues 787 to 807; that stretch reads AFFLVFFLVTAFFGTGNIASI. At 808 to 824 the chain is on the cytoplasmic side; that stretch reads NSFDLASVYCFLTVFSP. The chain crosses the membrane as a helical span at residues 825–845; it reads FMMGALMMWKILIPFVLVMCA. Over 846 to 858 the chain is Lumenal; that stretch reads FEAVQLTTQLSSK. Residues 859 to 879 form a helical membrane-spanning segment; it reads SLFLIVLVISDIMALHFFFLV. Topologically, residues 880–894 are cytoplasmic; it reads KDYGSWLDIGTSISH. A helical transmembrane segment spans residues 895-915; sequence YVIVMSMTIFLVFLNGLAQLL. The Lumenal portion of the chain corresponds to 916–931; it reads TTKKLRLCGKPKSHFM.

This sequence belongs to the PIGG/PIGN/PIGO family. PIGN subfamily.

The protein resides in the endoplasmic reticulum membrane. Its pathway is glycolipid biosynthesis; glycosylphosphatidylinositol-anchor biosynthesis. Functionally, ethanolamine phosphate transferase that catalyzes an ethanolamine phosphate (EtNP) transfer from phosphatidylethanolamine (PE) to the 2-OH position of the first alpha-1,4-linked mannose of the alpha-D-Man-(1-&gt;6)-alpha-D-Man-(1-&gt;4)-alpha-D-GlcN-(1-&gt;6)-(1-radyl,2-acyl-sn-glycero-3-phospho)-2-acyl-inositol (also termed H3) intermediate to generate an alpha-D-Man-(1-&gt;6)-2-PEtn-alpha-D-Man-(1-&gt;4)-alpha-D-GlcN-(1-&gt;6)-(1-radyl,2-acyl-sn-glycero-3-phospho)-2-acyl-inositol and participates in the eighth step of the glycosylphosphatidylinositol-anchor biosynthesis. May act as suppressor of replication stress and chromosome missegregation. The chain is GPI ethanolamine phosphate transferase 1 from Homo sapiens (Human).